The following is a 101-amino-acid chain: Integration host factor subunit beta (101 aa).

It belongs to the bacterial histone-like protein family. In terms of assembly, heterodimer of an alpha and a beta chain.

Functionally, this protein is one of the two subunits of integration host factor, a specific DNA-binding protein that functions in genetic recombination as well as in transcriptional and translational control. The chain is Integration host factor subunit beta from Nitrobacter hamburgensis (strain DSM 10229 / NCIMB 13809 / X14).